The primary structure comprises 504 residues: 2-isopropylmalate synthase (504 aa).

The Pyruvate carboxyltransferase domain occupies I6–Y267. Mn(2+)-binding residues include D15, H201, H203, and N237. The tract at residues E391–N504 is regulatory domain.

The protein belongs to the alpha-IPM synthase/homocitrate synthase family. LeuA type 1 subfamily. As to quaternary structure, homodimer. Mn(2+) serves as cofactor.

It is found in the cytoplasm. The catalysed reaction is 3-methyl-2-oxobutanoate + acetyl-CoA + H2O = (2S)-2-isopropylmalate + CoA + H(+). Its pathway is amino-acid biosynthesis; L-leucine biosynthesis; L-leucine from 3-methyl-2-oxobutanoate: step 1/4. In terms of biological role, catalyzes the condensation of the acetyl group of acetyl-CoA with 3-methyl-2-oxobutanoate (2-ketoisovalerate) to form 3-carboxy-3-hydroxy-4-methylpentanoate (2-isopropylmalate). The chain is 2-isopropylmalate synthase from Campylobacter concisus (strain 13826).